The sequence spans 696 residues: Zinc finger SWIM domain-containing protein 3 (696 aa).

Residues 531-572 form an SWIM-type zinc finger; sequence VDVQLLEDSHQVSKDGCSCSCSFQQWYHLPCRHILALLHTSQ.

This Homo sapiens (Human) protein is Zinc finger SWIM domain-containing protein 3 (ZSWIM3).